The following is a 251-amino-acid chain: L-xylulose reductase (251 aa).

13-42 (LVTGASQGIGKEICLSLAKAGAQVIAFARN) is an NADP(+) binding site. A substrate-binding site is contributed by Ser143. Tyr156 serves as the catalytic Proton acceptor. NADP(+) is bound at residue Lys160.

It belongs to the short-chain dehydrogenases/reductases (SDR) family. As to quaternary structure, homotetramer. In terms of tissue distribution, expressed in intestine, gonad and spermatids (at protein level). Expressed in intestine, uterine seam, gonadal sheath cells, spermathecal-uterus valve and spermatids.

The protein localises to the cell membrane. It catalyses the reaction xylitol + NADP(+) = L-xylulose + NADPH + H(+). Strongly inhibited by 10% dimethyl sulfoxide. Functionally, catalyzes the NADPH-dependent reduction of L-xylulose, D-xylulose, L-(+) erythrulose, D-erythrose, D-threose, L-ribulose, 1,4-dibromo-2,3-butanedione and 2,3-heptanedione. Also active against isatin, 9,10-phenanthrenequinone, menadione, 2,3-hexaenadione and 3,4-hexahenadione. No activity observed when tested using NADH rather than NADPH. This chain is L-xylulose reductase, found in Caenorhabditis elegans.